Here is a 140-residue protein sequence, read N- to C-terminus: Nucleoside diphosphate kinase (140 aa).

ATP contacts are provided by lysine 11, phenylalanine 59, arginine 87, threonine 93, arginine 104, and asparagine 114. The active-site Pros-phosphohistidine intermediate is histidine 117.

The protein belongs to the NDK family. Homotetramer. It depends on Mg(2+) as a cofactor.

It is found in the cytoplasm. The catalysed reaction is a 2'-deoxyribonucleoside 5'-diphosphate + ATP = a 2'-deoxyribonucleoside 5'-triphosphate + ADP. It catalyses the reaction a ribonucleoside 5'-diphosphate + ATP = a ribonucleoside 5'-triphosphate + ADP. In terms of biological role, major role in the synthesis of nucleoside triphosphates other than ATP. The ATP gamma phosphate is transferred to the NDP beta phosphate via a ping-pong mechanism, using a phosphorylated active-site intermediate. The protein is Nucleoside diphosphate kinase of Methylorubrum populi (strain ATCC BAA-705 / NCIMB 13946 / BJ001) (Methylobacterium populi).